A 159-amino-acid chain; its full sequence is MKVETCVYSGYKIHPGHGKRLVRTDGKVQIFLSGKALKGAKLRRNPRDIRWTVLYRIKNKKGTHGQEQVTRKKTKKSVQVVNRAVAGLSLDAILAKRNQTEDFRRQQREQAAKIAKDANKAVRAAKAAANKEKKASQPKTQQKTAKNVKTAAPRVGGKR.

The disordered stretch occupies residues 118–159 (ANKAVRAAKAAANKEKKASQPKTQQKTAKNVKTAAPRVGGKR). Over residues 137 to 147 (QPKTQQKTAKN) the composition is skewed to polar residues.

The protein belongs to the eukaryotic ribosomal protein eL24 family.

The polypeptide is Large ribosomal subunit protein eL24 (Caenorhabditis elegans).